The chain runs to 436 residues: Hydrogenobyrinate a,c-diamide synthase (436 aa).

Residues 244–435 (RIAVARDDAF…MHVIDFSGEA (192 aa)) form the GATase cobBQ-type domain. Cys327 acts as the Nucleophile in catalysis.

Belongs to the CobB/CbiA family. Mg(2+) is required as a cofactor.

It carries out the reaction hydrogenobyrinate + 2 L-glutamine + 2 ATP + 2 H2O = hydrogenobyrinate a,c-diamide + 2 L-glutamate + 2 ADP + 2 phosphate + 2 H(+). The protein operates within cofactor biosynthesis; adenosylcobalamin biosynthesis; cob(II)yrinate a,c-diamide from precorrin-2 (aerobic route): step 9/10. Catalyzes the ATP-dependent amidation of the two carboxylate groups at positions a and c of hydrogenobyrinate, using either L-glutamine or ammonia as the nitrogen source. This chain is Hydrogenobyrinate a,c-diamide synthase, found in Brucella suis biovar 1 (strain 1330).